Here is a 447-residue protein sequence, read N- to C-terminus: Probable ribosomal RNA small subunit methyltransferase B (447 aa).

S-adenosyl-L-methionine-binding positions include 259–265 (CAAPGGK), Asp283, Asp310, and Asp329. Cys382 acts as the Nucleophile in catalysis.

The protein belongs to the class I-like SAM-binding methyltransferase superfamily. RsmB/NOP family.

It localises to the cytoplasm. The catalysed reaction is cytidine(967) in 16S rRNA + S-adenosyl-L-methionine = 5-methylcytidine(967) in 16S rRNA + S-adenosyl-L-homocysteine + H(+). Specifically methylates the cytosine at position 967 (m5C967) of 16S rRNA. This Bacillus subtilis (strain 168) protein is Probable ribosomal RNA small subunit methyltransferase B.